Consider the following 166-residue polypeptide: Phospholipase A2 inhibitor (166 aa).

The N-terminal stretch at 1–19 (MRLILLSGLLLLGIFLANG) is a signal peptide. The C-type lectin domain occupies 46-161 (LRGAFLTVYK…CDDNLLVVCE (116 aa)). 2 N-linked (GlcNAc...) asparagine glycosylation sites follow: N61 and N122. 2 disulfides stabilise this stretch: C83/C160 and C138/C152.

It belongs to the alpha-type phospholipase A2 inhibitor family. In terms of assembly, homotrimer; non-covalently linked. In terms of tissue distribution, expressed by the liver.

It localises to the secreted. Functionally, this phospholipase A2 inhibitor binds directly phospholipase A2 in the presence or absence of calcium. This is Phospholipase A2 inhibitor from Bothrops alternatus (Urutu).